The chain runs to 296 residues: Protoheme IX farnesyltransferase (296 aa).

8 helical membrane-spanning segments follow: residues 8–28 (VTKP…FFLA), 35–55 (WILM…GCAI), 84–104 (AAFF…SYFT), 107–127 (VAVA…TMYF), 132–152 (VYGT…GYCA), 162–182 (AILL…IAIF), 215–235 (FAVV…FMVV), and 264–284 (VFFF…LDFN).

This sequence belongs to the UbiA prenyltransferase family. Protoheme IX farnesyltransferase subfamily.

It localises to the cell inner membrane. The catalysed reaction is heme b + (2E,6E)-farnesyl diphosphate + H2O = Fe(II)-heme o + diphosphate. It participates in porphyrin-containing compound metabolism; heme O biosynthesis; heme O from protoheme: step 1/1. Converts heme B (protoheme IX) to heme O by substitution of the vinyl group on carbon 2 of heme B porphyrin ring with a hydroxyethyl farnesyl side group. This chain is Protoheme IX farnesyltransferase, found in Marinomonas sp. (strain MWYL1).